Reading from the N-terminus, the 145-residue chain is Large ribosomal subunit protein uL16 (145 aa).

It belongs to the universal ribosomal protein uL16 family. In terms of assembly, part of the 50S ribosomal subunit.

In terms of biological role, binds 23S rRNA and is also seen to make contacts with the A and possibly P site tRNAs. This Lactobacillus gasseri (strain ATCC 33323 / DSM 20243 / BCRC 14619 / CIP 102991 / JCM 1131 / KCTC 3163 / NCIMB 11718 / NCTC 13722 / AM63) protein is Large ribosomal subunit protein uL16.